A 338-amino-acid polypeptide reads, in one-letter code: UPF0324 membrane protein TauZ (338 aa).

10 consecutive transmembrane segments (helical) span residues 12–31 (IEAAFPGFAVSALVAATAQF), 36–55 (YGAPAMLLALLLGLALNFLA), 75–92 (LGVALLGARISAGMLAAL), 96–118 (AIALVAAGVVLTILFALAASRLV), 125–147 (ALLTGGSVAICGASAAMAIAAVL), 162–184 (LSVTVLSTVAMVLYPMLAGFFGF), 191–213 (VFLGGTIHDVAQVVGAGFSIGPE), 223–245 (LIRVSMLAPVVLCFSLAIRARGL), 258–280 (PGFVIGFLVLAALNSLGLVPAAV), and 315–337 (AIALILAETVFLAVFVTIGLHVL).

It belongs to the UPF0324 family.

The protein localises to the cell membrane. The polypeptide is UPF0324 membrane protein TauZ (tauZ) (Paracoccus denitrificans).